Reading from the N-terminus, the 143-residue chain is Ribonuclease H (143 aa).

One can recognise an RNase H type-1 domain in the interval 1–141 (MKHVEIFTDG…VDKLASDAAL (141 aa)). The Mg(2+) site is built by Asp-9, Glu-47, Asp-69, and Asp-133.

Belongs to the RNase H family. As to quaternary structure, monomer. Mg(2+) is required as a cofactor.

It localises to the cytoplasm. It carries out the reaction Endonucleolytic cleavage to 5'-phosphomonoester.. Its function is as follows. Endonuclease that specifically degrades the RNA of RNA-DNA hybrids. This Novosphingobium aromaticivorans (strain ATCC 700278 / DSM 12444 / CCUG 56034 / CIP 105152 / NBRC 16084 / F199) protein is Ribonuclease H.